A 235-amino-acid polypeptide reads, in one-letter code: Phosphoribosylaminoimidazole-succinocarboxamide synthase (235 aa).

This sequence belongs to the SAICAR synthetase family.

The enzyme catalyses 5-amino-1-(5-phospho-D-ribosyl)imidazole-4-carboxylate + L-aspartate + ATP = (2S)-2-[5-amino-1-(5-phospho-beta-D-ribosyl)imidazole-4-carboxamido]succinate + ADP + phosphate + 2 H(+). The protein operates within purine metabolism; IMP biosynthesis via de novo pathway; 5-amino-1-(5-phospho-D-ribosyl)imidazole-4-carboxamide from 5-amino-1-(5-phospho-D-ribosyl)imidazole-4-carboxylate: step 1/2. The sequence is that of Phosphoribosylaminoimidazole-succinocarboxamide synthase from Streptococcus thermophilus (strain CNRZ 1066).